The chain runs to 189 residues: Photosystem I assembly protein Ycf4 (189 aa).

2 consecutive transmembrane segments (helical) span residues 25–45 (SVYF…LAGL) and 62–82 (LVFI…SLAG).

The protein belongs to the Ycf4 family.

It is found in the cellular thylakoid membrane. In terms of biological role, seems to be required for the assembly of the photosystem I complex. The polypeptide is Photosystem I assembly protein Ycf4 (Synechococcus sp. (strain JA-2-3B'a(2-13)) (Cyanobacteria bacterium Yellowstone B-Prime)).